Consider the following 244-residue polypeptide: Methylthioribulose-1-phosphate dehydratase (244 aa).

A substrate-binding site is contributed by C89. 2 residues coordinate Zn(2+): H107 and H109. E130 acts as the Proton donor/acceptor in catalysis. H192 provides a ligand contact to Zn(2+).

The protein belongs to the aldolase class II family. MtnB subfamily. Zn(2+) serves as cofactor.

It is found in the cytoplasm. It carries out the reaction 5-(methylsulfanyl)-D-ribulose 1-phosphate = 5-methylsulfanyl-2,3-dioxopentyl phosphate + H2O. It functions in the pathway amino-acid biosynthesis; L-methionine biosynthesis via salvage pathway; L-methionine from S-methyl-5-thio-alpha-D-ribose 1-phosphate: step 2/6. Catalyzes the dehydration of methylthioribulose-1-phosphate (MTRu-1-P) into 2,3-diketo-5-methylthiopentyl-1-phosphate (DK-MTP-1-P). The protein is Methylthioribulose-1-phosphate dehydratase of Saccharomyces cerevisiae (strain YJM789) (Baker's yeast).